The following is a 448-amino-acid chain: NADH oxidase (448 aa).

Residues 7–11 (GSGAA), C42, V80, 110–113 (ATGA), and R132 contribute to the FAD site. The active-site Redox-active is the C42. Residues 152-167 (VAVV…MAYG), E179, and G243 each bind NAD(+). Residues 271-281 (TSIPNIYAVGD), G299, and T300 contribute to the FAD site. V328 contributes to the NAD(+) binding site. Y423 is a binding site for FAD.

Belongs to the class-III pyridine nucleotide-disulfide oxidoreductase family. The cofactor is FAD.

The enzyme catalyses 2 NADH + O2 + 2 H(+) = 2 NAD(+) + 2 H2O. Functionally, catalyzes the four-electron reduction of molecular oxygen to water. This is NADH oxidase from Methanocaldococcus jannaschii (strain ATCC 43067 / DSM 2661 / JAL-1 / JCM 10045 / NBRC 100440) (Methanococcus jannaschii).